The chain runs to 177 residues: NADH-quinone oxidoreductase subunit B (177 aa).

Residues cysteine 36, cysteine 37, cysteine 101, and cysteine 130 each coordinate [4Fe-4S] cluster.

Belongs to the complex I 20 kDa subunit family. In terms of assembly, NDH-1 is composed of 14 different subunits. Subunits NuoB, C, D, E, F, and G constitute the peripheral sector of the complex. The cofactor is [4Fe-4S] cluster.

It is found in the cell inner membrane. It carries out the reaction a quinone + NADH + 5 H(+)(in) = a quinol + NAD(+) + 4 H(+)(out). Its function is as follows. NDH-1 shuttles electrons from NADH, via FMN and iron-sulfur (Fe-S) centers, to quinones in the respiratory chain. The immediate electron acceptor for the enzyme in this species is believed to be ubiquinone. Couples the redox reaction to proton translocation (for every two electrons transferred, four hydrogen ions are translocated across the cytoplasmic membrane), and thus conserves the redox energy in a proton gradient. In Hydrogenobaculum sp. (strain Y04AAS1), this protein is NADH-quinone oxidoreductase subunit B.